A 380-amino-acid chain; its full sequence is Beta-1,3-N-acetylglucosaminyltransferase lunatic fringe (380 aa).

Residues 1-8 are Cytoplasmic-facing; the sequence is MLKRCGRR. Residues 9–29 traverse the membrane as a helical; Signal-anchor for type II membrane protein segment; the sequence is LLLALAGALLACLLVLTADPP. The Lumenal portion of the chain corresponds to 30-380; it reads PPPVPAERGR…TSWCPRSAIF (351 aa). Positions 85–110 are disordered; that stretch reads SRRDVGPPPGGAPRPADGPPRPLAEP. Residues 90-107 are compositionally biased toward pro residues; the sequence is GPPPGGAPRPADGPPRPL. Arg130 provides a ligand contact to substrate. N-linked (GlcNAc...) asparagine glycosylation is present at Asn168. Cystine bridges form between Cys169-Cys180 and Cys198-Cys261. Asp202 lines the substrate pocket. Asp203 provides a ligand contact to Mn(2+). Asp291 is a catalytic residue. His315 lines the Mn(2+) pocket. Cys365 and Cys374 form a disulfide bridge.

Belongs to the glycosyltransferase 31 family. It depends on Mn(2+) as a cofactor. The cofactor is Co(2+). Post-translationally, a soluble form may be derived from the membrane form by proteolytic processing.

Its subcellular location is the golgi apparatus. It is found in the golgi apparatus membrane. It carries out the reaction 3-O-(alpha-L-fucosyl)-L-threonyl-[EGF-like domain protein] + UDP-N-acetyl-alpha-D-glucosamine = 3-O-(N-acetyl-beta-D-glucosaminyl-(1-&gt;3)-alpha-L-fucosyl)-L-threonyl-[EGF-like domain protein] + UDP + H(+). The enzyme catalyses 3-O-(alpha-L-fucosyl)-L-seryl-[EGF-like domain protein] + UDP-N-acetyl-alpha-D-glucosamine = 3-O-(N-acetyl-beta-D-glucosaminyl-(1-&gt;3)-alpha-L-fucosyl)-L-seryl-[EGF-like domain protein] + UDP + H(+). Glycosyltransferase that initiates the elongation of O-linked fucose residues attached to EGF-like repeats in the extracellular domain of Notch molecules. Modulates NOTCH1 activity by modifying O-fucose residues at specific EGF-like domains resulting in inhibition of NOTCH1 activation by JAG1 and enhancement of NOTCH1 activation by DLL1 via an increase in its binding to DLL1. Decreases the binding of JAG1 to NOTCH2 but not that of DLL1. Essential mediator of somite segmentation and patterning. This chain is Beta-1,3-N-acetylglucosaminyltransferase lunatic fringe (LFNG), found in Bos taurus (Bovine).